The chain runs to 156 residues: Small ribosomal subunit protein uS7c (156 aa).

The protein belongs to the universal ribosomal protein uS7 family. As to quaternary structure, part of the 30S ribosomal subunit.

The protein localises to the plastid. The protein resides in the chloroplast. In terms of biological role, one of the primary rRNA binding proteins, it binds directly to 16S rRNA where it nucleates assembly of the head domain of the 30S subunit. The chain is Small ribosomal subunit protein uS7c (rps7) from Stangeria eriopus (Natal grass cycad).